Consider the following 245-residue polypeptide: Membrane-spanning 4-domains subfamily A member 15 (245 aa).

The segment at 1–30 is disordered; the sequence is MWERRGRGESAAGTAAVASRNASGLRPPPA. The next 4 membrane-spanning stretches (helical) occupy residues 78-98, 103-123, 147-167, and 176-196; these read GTVQ…LLMV, LGML…FIIS, ILSA…FGVT, and LAVL…ATHF.

It belongs to the MS4A family.

Its subcellular location is the membrane. Functionally, may be involved in signal transduction as a component of a multimeric receptor complex. The chain is Membrane-spanning 4-domains subfamily A member 15 (Ms4a15) from Mus musculus (Mouse).